A 605-amino-acid polypeptide reads, in one-letter code: Elongation factor 4 (605 aa).

Residues 4-186 (SATRNFCIIA…AIVARVPAPK (183 aa)) form the tr-type G domain. GTP-binding positions include 16 to 21 (DHGKST) and 133 to 136 (NKID).

The protein belongs to the TRAFAC class translation factor GTPase superfamily. Classic translation factor GTPase family. LepA subfamily.

It is found in the cell membrane. It carries out the reaction GTP + H2O = GDP + phosphate + H(+). Functionally, required for accurate and efficient protein synthesis under certain stress conditions. May act as a fidelity factor of the translation reaction, by catalyzing a one-codon backward translocation of tRNAs on improperly translocated ribosomes. Back-translocation proceeds from a post-translocation (POST) complex to a pre-translocation (PRE) complex, thus giving elongation factor G a second chance to translocate the tRNAs correctly. Binds to ribosomes in a GTP-dependent manner. In Dehalococcoides mccartyi (strain ATCC BAA-2266 / KCTC 15142 / 195) (Dehalococcoides ethenogenes (strain 195)), this protein is Elongation factor 4.